We begin with the raw amino-acid sequence, 291 residues long: ATP synthase gamma chain (291 aa).

It belongs to the ATPase gamma chain family. In terms of assembly, F-type ATPases have 2 components, CF(1) - the catalytic core - and CF(0) - the membrane proton channel. CF(1) has five subunits: alpha(3), beta(3), gamma(1), delta(1), epsilon(1). CF(0) has three main subunits: a, b and c.

The protein resides in the cell inner membrane. Its function is as follows. Produces ATP from ADP in the presence of a proton gradient across the membrane. The gamma chain is believed to be important in regulating ATPase activity and the flow of protons through the CF(0) complex. The protein is ATP synthase gamma chain of Burkholderia thailandensis (strain ATCC 700388 / DSM 13276 / CCUG 48851 / CIP 106301 / E264).